A 301-amino-acid polypeptide reads, in one-letter code: Runt-related transcription factor rnt-1 (301 aa).

Residues 10–138 (NFIEQQPAPA…TVDGPRDARI (129 aa)) enclose the Runt domain. Interaction with DNA regions lie at residues 40–44 (RSNKS), 95–103 (RFVGRSGRG), and 128–137 (VTVDGPRDAR). Chloride-binding residues include R99 and V130. The segment at 237–301 (PSIFITPTSD…SSSPTIWRPF (65 aa)) is disordered. S255 carries the phosphoserine modification. Polar residues predominate over residues 255–276 (SPRSITKSSETSINLIQETPES). Residues 285–301 (VSITSSNSSSPTIWRPF) show a composition bias toward low complexity.

In terms of assembly, interacts with CBFbeta homolog bro-1; acts to increase the affinity and specificity of interaction of rnt-1 with DNA. Interacts with TGF-beta pathway protein sma-4. Post-translationally, may be ubiquitinated in order to be targeted for proteasome-mediated degradation in intestinal cells. May be phosphorylated by members of the p38 MAP kinase pathway. As to expression, expressed in the intestine.

The protein resides in the nucleus. In terms of biological role, transcription factor. Binds to regulatory DNA sequences in order to modulate transcription; negatively autoregulates its own expression, perhaps dependent upon CBF beta homolog bro-1. Promotes proliferation, and prevents differentiation, of seam cells, a stem cell-like lineage, acting in concert with bro-1. Required for controlling cell proliferation in the seam cells, perhaps by repressing expression of cyclin-dependent kinase inhibitor cki-1. Inhibition of seam cell differentiation is regulated by rnt-1 and bro-1, perhaps acting upstream of pop-1, by antagonizing pop-1 repressor function. Required for asymmetrical cell divisions in the lineage derived from a posterior embryonic seam cell, the T blast cell, and for asymmetric expression of zinc finger protein tlp-1. Regulates growth and male tail development. Involved in the oxidative stress response, perhaps downstream of the p38 MAP kinase pathway, and acting as part of a negative feedback loop via a transcriptional target gene, tyrosine-protein phosphatase vhp-1. Positively modulates dopaminergic signaling in a non-cell autonomous manner. May be involved in TGF-beta signaling. The protein is Runt-related transcription factor rnt-1 of Caenorhabditis elegans.